An 830-amino-acid polypeptide reads, in one-letter code: MKQKLRSSVQIILLFALTAVGLTGQSYPGKPKIIRCRSLEKETFSCWWKPGSDGGLPTNYTLFYSKDSEEKIYECPDYGMSGPNSCYFDKNHTNPWTTYNITVMAMNEIGSNSSDPQYVDVTSIVQPDAPVNLSLETKTSASTTYLLAKWSPPPLADVTSNSHVYRYELRLKPEEKEEWETVSVGVQTQYKVNRLQAGVKYVVQVRCVLDIGEWSEWSSERHIHIPNGESPPEKPTIIKCRSPEKETFTCWWKPGSDGGHPTNYTLLYSKEGEERVYECPDYKTAGPNSCYFDKKHTSFWTIYNITVKATNEIGSNVSDPLYVDVTYIVQTDPPVNVTLELKKTVNRKPYLVLTWSPPPLADVRSGWLTLDYELRLKPEEAEEWETIFVGQQTHYKMFSLNPGKKYIVQIHCKPDHHGSWSEWSLEKYLQIPTDFRIKDMVVWIIVGVLSSLICLVMSWTMVLKGYRMIAFILPPVPGPKIKGIDTHLLETGKSEELLSALGCHGFPPTSDCEELLIEYLEVEDSEDQQLMPSHDNGHPSKNAKMIAKETDSDSGRGSCDSPSLLSEKCRESRAILSTLQTQDIRDVQENNGRRHWETQCIASEQKILLFNNESTKSPIWPAAQLPDNQPPMFAYHSTVDVHKITLCTIDVNIAPVLVENEEQHQPQYPITETVHDNMEKHREVENLYSKTDQTTVQVKQNRPNDKSPFSKPKLMDYVEVHKVRQDEVAAVLLKHKENSGKIEKYTVPGTSKEYTKVSTVVDHNILVLMPDSRIQHIPVSQEPAMEMSQNLQQGQTEKNMSYCLTVPSECKRETSASEYMDPSSFIPAFK.

A signal peptide spans 1–23 (MKQKLRSSVQIILLFALTAVGLT). Over 24–439 (GQSYPGKPKI…QIPTDFRIKD (416 aa)) the chain is Extracellular. 4 consecutive Fibronectin type-III domains span residues 30–128 (KPKI…VQPD), 129–228 (APVN…IPNG), 231–331 (PPEK…IVQT), and 333–434 (PPVN…IPTD). Residues C36 and C46 are joined by a disulfide bond. Residue N59 is glycosylated (N-linked (GlcNAc...) asparagine). A disulfide bridge links C75 with C86. 8 N-linked (GlcNAc...) asparagine glycosylation sites follow: N91, N100, N112, N132, N263, N304, N316, and N336. Zn(2+)-binding residues include D415 and H417. Residues 420–424 (WSEWS) carry the WSXWS motif motif. The chain crosses the membrane as a helical span at residues 440-460 (MVVWIIVGVLSSLICLVMSWT). The Cytoplasmic portion of the chain corresponds to 461 to 830 (MVLKGYRMIA…DPSSFIPAFK (370 aa)). A Box 1 motif motif is present at residues 472 to 480 (ILPPVPGPK).

It belongs to the type I cytokine receptor family. Type 1 subfamily.

It localises to the membrane. This is a receptor for the anterior pituitary hormone prolactin. In Columba livia (Rock dove), this protein is Prolactin receptor (PRLR).